The chain runs to 383 residues: Acetylornithine deacetylase (383 aa).

His80 serves as a coordination point for Zn(2+). Asp82 is a catalytic residue. Residue Asp112 coordinates Zn(2+). Residue Glu144 is part of the active site. Residues Glu145, Glu169, and His355 each coordinate Zn(2+).

It belongs to the peptidase M20A family. ArgE subfamily. In terms of assembly, homodimer. It depends on Zn(2+) as a cofactor. Co(2+) is required as a cofactor. Glutathione serves as cofactor.

The protein resides in the cytoplasm. The catalysed reaction is N(2)-acetyl-L-ornithine + H2O = L-ornithine + acetate. It functions in the pathway amino-acid biosynthesis; L-arginine biosynthesis; L-ornithine from N(2)-acetyl-L-ornithine (linear): step 1/1. In terms of biological role, catalyzes the hydrolysis of the amide bond of N(2)-acetylated L-amino acids. Cleaves the acetyl group from N-acetyl-L-ornithine to form L-ornithine, an intermediate in L-arginine biosynthesis pathway, and a branchpoint in the synthesis of polyamines. In Escherichia coli O17:K52:H18 (strain UMN026 / ExPEC), this protein is Acetylornithine deacetylase.